The primary structure comprises 103 residues: Small ribosomal subunit protein uS10 (103 aa).

This sequence belongs to the universal ribosomal protein uS10 family. Part of the 30S ribosomal subunit.

Functionally, involved in the binding of tRNA to the ribosomes. In Chlorobium limicola (strain DSM 245 / NBRC 103803 / 6330), this protein is Small ribosomal subunit protein uS10.